A 205-amino-acid chain; its full sequence is Holliday junction branch migration complex subunit RuvA (205 aa).

The interval 1–64 (MIGKLKGTID…EDQLRLFGFL (64 aa)) is domain I. The tract at residues 65–143 (SALEREWFRL…AFAGEMSASI (79 aa)) is domain II. Residues 144-153 (GLKQELGEGV) are flexible linker. A domain III region spans residues 153-205 (VAAAPVSDAVSALTNLGYSRDQAANAVAAALKNGGEGGDSAKLIRLGLKELAR).

Belongs to the RuvA family. As to quaternary structure, homotetramer. Forms an RuvA(8)-RuvB(12)-Holliday junction (HJ) complex. HJ DNA is sandwiched between 2 RuvA tetramers; dsDNA enters through RuvA and exits via RuvB. An RuvB hexamer assembles on each DNA strand where it exits the tetramer. Each RuvB hexamer is contacted by two RuvA subunits (via domain III) on 2 adjacent RuvB subunits; this complex drives branch migration. In the full resolvosome a probable DNA-RuvA(4)-RuvB(12)-RuvC(2) complex forms which resolves the HJ.

The protein resides in the cytoplasm. The RuvA-RuvB-RuvC complex processes Holliday junction (HJ) DNA during genetic recombination and DNA repair, while the RuvA-RuvB complex plays an important role in the rescue of blocked DNA replication forks via replication fork reversal (RFR). RuvA specifically binds to HJ cruciform DNA, conferring on it an open structure. The RuvB hexamer acts as an ATP-dependent pump, pulling dsDNA into and through the RuvAB complex. HJ branch migration allows RuvC to scan DNA until it finds its consensus sequence, where it cleaves and resolves the cruciform DNA. This is Holliday junction branch migration complex subunit RuvA from Sinorhizobium fredii (strain NBRC 101917 / NGR234).